The sequence spans 241 residues: Tumor necrosis factor receptor superfamily member grnd (241 aa).

An N-terminal signal peptide occupies residues 1–27 (MSVRKLSALSLSIGGVPLIPSVSLVAA). Residues 28-98 (ANGESRDCHG…EMLDIQNTQQ (71 aa)) are Extracellular-facing. Intrachain disulfides connect Cys-35-Cys-47, Cys-40-Cys-54, Cys-57-Cys-77, and Cys-61-Cys-73. Asn-63 is a glycosylation site (N-linked (GlcNAc...) asparagine). A helical membrane pass occupies residues 99–119 (LILLLLTILLVLIALRCAFQF). The Cytoplasmic portion of the chain corresponds to 120-241 (LRWLIGNRCF…PSAATIPVAF (122 aa)).

In terms of assembly, interacts (via extracellular cysteine-rich domain) with egr (via secreted TNF-homology soluble form); forms heterohexamers when 3 copies associate with egr trimers. Interacts with Traf6/TRAF2 and veli (via PDZ domain). In terms of processing, N-glycosylated on Asn-63. Glycosylation regulates ligand binding, specifically reducing affinity for the TNF egr, thereby inhibiting activation of JNK signaling. As to expression, expressed in the adult midgut; under normal conditions expressed at lower levels than the other TNF receptor wgn.

Its subcellular location is the apical cell membrane. It localises to the cytoplasmic vesicle membrane. Acts as a receptor for TNF-cytokine egr. Plays a role in activation of JNK signaling and is required for egr-induced apoptosis, including in wing imaginal discs during development. May also play an egr-independent role in cell proliferation. TNF receptor involved in triggering JNK-dependent proliferation of the enteroblast-enterocyte lineage in response to stress-induced release of egr by intestinal stem cells and enteroblasts. Involved in regulation of insulin production in response to dietary protein shortage keeping systemic growth in check. Activation in brain insulin producing cells through binding of egr released into the hemolymph in response to dietary amino acid shortage, results in JNK-dependent inhibition of insulin production. The protein is Tumor necrosis factor receptor superfamily member grnd of Drosophila melanogaster (Fruit fly).